A 101-amino-acid chain; its full sequence is Large ribosomal subunit protein eL31 (101 aa).

The protein belongs to the eukaryotic ribosomal protein eL31 family.

The protein is Large ribosomal subunit protein eL31 of Ignicoccus hospitalis (strain KIN4/I / DSM 18386 / JCM 14125).